Consider the following 694-residue polypeptide: Elongation factor G (694 aa).

Residues 9-288 (DAIRNIGIMA…VIVKWLPSPL (280 aa)) form the tr-type G domain. Residues 18 to 25 (AHIDAGKT), 82 to 86 (DTPGH), and 136 to 139 (NKMD) each bind GTP.

The protein belongs to the TRAFAC class translation factor GTPase superfamily. Classic translation factor GTPase family. EF-G/EF-2 subfamily.

It is found in the cytoplasm. Functionally, catalyzes the GTP-dependent ribosomal translocation step during translation elongation. During this step, the ribosome changes from the pre-translocational (PRE) to the post-translocational (POST) state as the newly formed A-site-bound peptidyl-tRNA and P-site-bound deacylated tRNA move to the P and E sites, respectively. Catalyzes the coordinated movement of the two tRNA molecules, the mRNA and conformational changes in the ribosome. The sequence is that of Elongation factor G from Chlamydia trachomatis serovar A (strain ATCC VR-571B / DSM 19440 / HAR-13).